Here is a 181-residue protein sequence, read N- to C-terminus: Adenylyl-sulfate kinase (181 aa).

Residue 20-27 (GLSGAGKS) participates in ATP binding. Catalysis depends on Ser-94, which acts as the Phosphoserine intermediate.

This sequence belongs to the APS kinase family.

The catalysed reaction is adenosine 5'-phosphosulfate + ATP = 3'-phosphoadenylyl sulfate + ADP + H(+). It participates in sulfur metabolism; hydrogen sulfide biosynthesis; sulfite from sulfate: step 2/3. Its function is as follows. Catalyzes the synthesis of activated sulfate. This Deinococcus deserti (strain DSM 17065 / CIP 109153 / LMG 22923 / VCD115) protein is Adenylyl-sulfate kinase.